Reading from the N-terminus, the 203-residue chain is Glycerol-3-phosphate acyltransferase (203 aa).

The next 5 membrane-spanning stretches (helical) occupy residues 10-30, 59-79, 87-107, 116-136, and 160-180; these read MLIL…GLIL, GAAA…VLLA, AAQV…WLGF, FLGL…LSWL, and LVLL…LMVF.

This sequence belongs to the PlsY family. Probably interacts with PlsX.

It is found in the cell inner membrane. The catalysed reaction is an acyl phosphate + sn-glycerol 3-phosphate = a 1-acyl-sn-glycero-3-phosphate + phosphate. The protein operates within lipid metabolism; phospholipid metabolism. Functionally, catalyzes the transfer of an acyl group from acyl-phosphate (acyl-PO(4)) to glycerol-3-phosphate (G3P) to form lysophosphatidic acid (LPA). This enzyme utilizes acyl-phosphate as fatty acyl donor, but not acyl-CoA or acyl-ACP. In Ruegeria pomeroyi (strain ATCC 700808 / DSM 15171 / DSS-3) (Silicibacter pomeroyi), this protein is Glycerol-3-phosphate acyltransferase.